The chain runs to 492 residues: Aerolysin-3 (492 aa).

An N-terminal signal peptide occupies residues 1 to 23; sequence MKKLKITGLSLIISGLLMAQAQA. 2 disulfide bridges follow: Cys42–Cys98 and Cys182–Cys187. Residues 68–84 form an interaction with host N-linked glycan region; that stretch reads WQISGLANGWVIMGPGY. The tract at residues 256–288 is part of the transmembrane beta-barrel after proteolytic activation of the toxin and insertion into the host membrane; it reads YGLSEKVTTKNKFKWPLVGETELSIEIAANQSW. An interaction with glycans from host GPI-anchor region spans residues 346–355; the sequence is RWGGNAWYTH. A propeptide spanning residues 446-492 is cleaved from the precursor; that stretch reads AAASHSSRARNLSAGQGLRLEIPLDAQELSGLGFNNVSLSVTPAANQ.

This sequence belongs to the aerolysin family. In terms of assembly, homodimer in solution; homoheptamer in the host membrane. After binding to GPI-anchored proteins in target membranes and proteolytic removal of the C-terminal propeptide, the protein assembles into a heptameric pre-pore complex. A further conformation change leads to insertion into the host membrane. In terms of processing, proteolytic cleavage and subsequent release of the propeptide trigger a major conformation change, leading to the formation of a heptameric pre-pore that then inserts into the host membrane.

The protein resides in the secreted. It is found in the host cell membrane. Secreted, cytolytic toxin that forms pores in host membranes after proteolytic removal of a C-terminal propeptide, leading to destruction of the membrane permeability barrier and cell death. The pores are formed by transmembrane beta-strands and are approximately 3 nm in diameter. The chain is Aerolysin-3 (ahh3) from Aeromonas hydrophila.